A 384-amino-acid chain; its full sequence is S-adenosylmethionine synthase (384 aa).

Position 15 (H15) interacts with ATP. D17 is a Mg(2+) binding site. Position 43 (E43) interacts with K(+). 2 residues coordinate L-methionine: E56 and Q99. The segment at 99–109 (QSSDINQGVDR) is flexible loop. ATP is bound by residues 164–166 (DAK), 230–231 (RF), D239, 245–246 (RK), A262, and K266. D239 contributes to the L-methionine binding site. An L-methionine-binding site is contributed by K270.

This sequence belongs to the AdoMet synthase family. Homotetramer; dimer of dimers. It depends on Mg(2+) as a cofactor. The cofactor is K(+).

It localises to the cytoplasm. The enzyme catalyses L-methionine + ATP + H2O = S-adenosyl-L-methionine + phosphate + diphosphate. Its pathway is amino-acid biosynthesis; S-adenosyl-L-methionine biosynthesis; S-adenosyl-L-methionine from L-methionine: step 1/1. Its function is as follows. Catalyzes the formation of S-adenosylmethionine (AdoMet) from methionine and ATP. The overall synthetic reaction is composed of two sequential steps, AdoMet formation and the subsequent tripolyphosphate hydrolysis which occurs prior to release of AdoMet from the enzyme. The chain is S-adenosylmethionine synthase from Histophilus somni (strain 129Pt) (Haemophilus somnus).